The following is a 1465-amino-acid chain: Neuropathy target esterase sws (1465 aa).

Residues 1–34 (MDVLEMLRASASGSYNTIFSEAWCQYVSKQITAT) are Lumenal-facing. The helical transmembrane segment at 35-55 (MYMYCALGMMGVLFLAWFMYF) threads the bilayer. Over 56-1465 (KRMARLRLRD…RSSANNETKN (1410 aa)) the chain is Cytoplasmic. A nucleoside 3',5'-cyclic phosphate is bound at residue 174–301 (IFGHFEKPVF…IRVIQVIMIR (128 aa)). 2 stretches are compositionally biased toward polar residues: residues 331–349 (STMS…RQTP) and 434–454 (QQSV…TPDG). Disordered stretches follow at residues 331–421 (STMS…TEVH) and 434–460 (QQSV…SCPP). S446 and S455 each carry phosphoserine. Residues 484-611 (ELGL…VVRR) and 600-727 (IVLD…LSHR) each bind a nucleoside 3',5'-cyclic phosphate. The PNPLA domain maps to 954 to 1120 (LVLGGGGARG…VNNLPGHLWR (167 aa)). The GXGXXG signature appears at 958–963 (GGGARG). The GXSXG motif lies at 985–989 (GVSIG). The Nucleophile role is filled by S987. Residue D1107 is the Proton acceptor of the active site. The DGA/G signature appears at 1107 to 1109 (DGG). Residue S1201 is modified to Phosphoserine. The tract at residues 1371 to 1465 (LERKTDKSTQ…RSSANNETKN (95 aa)) is disordered. Over residues 1378–1390 (STQSSPPTSSRTS) the composition is skewed to low complexity. Residues 1392 to 1402 (RGKEEARHMDN) show a composition bias toward basic and acidic residues. Residues 1413 to 1424 (TGSGATEGIHTS) show a composition bias toward polar residues. Over residues 1447-1456 (VYKDEDKENR) the composition is skewed to basic and acidic residues.

This sequence belongs to the NTE family. As to quaternary structure, interacts with Pka-C3; interaction inhibits the catalytic function of Pka-C3 and the esterase activity of sws.

Its subcellular location is the endoplasmic reticulum membrane. The catalysed reaction is a 1-acyl-sn-glycero-3-phosphocholine + H2O = sn-glycerol 3-phosphocholine + a fatty acid + H(+). Phospholipase B that deacylates intracellular phosphatidylcholine (PtdCho), generating glycerophosphocholine (GroPtdCho). This deacylation occurs at both sn-2 and sn-1 positions of PtdCho. Its specific chemical modification by certain organophosphorus (OP) compounds leads to distal axonopathy. Plays a role in the signaling mechanism between neurons and glia that regulates glia wrapping during development of the adult brain. Essential for membrane lipid homeostasis and cell survival in both neurons and glia of the adult brain. This is Neuropathy target esterase sws from Drosophila erecta (Fruit fly).